The following is a 125-amino-acid chain: Small ribosomal subunit protein eS25 (125 aa).

Residues 1-23 show a composition bias toward basic and acidic residues; the sequence is MPPKDDKKKKDAGKSAKKDKDPV. Positions 1–38 are disordered; that stretch reads MPPKDDKKKKDAGKSAKKDKDPVNKSGGKAKKKKWSKG. Residues 28 to 38 show a composition bias toward basic residues; it reads GKAKKKKWSKG. N6-acetyllysine is present on K43. K52 is modified (N6-acetyllysine; alternate). N6-succinyllysine; alternate is present on K52. N6-acetyllysine is present on residues K60 and K66. K94 bears the N6-acetyllysine; alternate mark. Position 94 is an N6-succinyllysine; alternate (K94).

The protein belongs to the eukaryotic ribosomal protein eS25 family. As to quaternary structure, component of the small ribosomal subunit.

The protein resides in the cytoplasm. Its function is as follows. Component of the small ribosomal subunit. The ribosome is a large ribonucleoprotein complex responsible for the synthesis of proteins in the cell. This chain is Small ribosomal subunit protein eS25 (RPS25), found in Homo sapiens (Human).